Here is a 428-residue protein sequence, read N- to C-terminus: Probable mannosyltransferase YUR1 (428 aa).

The Cytoplasmic segment spans residues 1–3 (MAK). The helical; Signal-anchor for type II membrane protein transmembrane segment at 4–24 (GGSLYIVGIFLPIWTFMIYIF) threads the bilayer. Residues 25 to 88 (GKELFLIRKY…TRQNDSDSFH (64 aa)) are stem region. The Lumenal segment spans residues 25–428 (GKELFLIRKY…YFLKEEQDEI (404 aa)). 4 N-linked (GlcNAc...) asparagine glycosylation sites follow: Asn-77, Asn-82, Asn-92, and Asn-167. The interval 89–428 (LRENATILML…YFLKEEQDEI (340 aa)) is catalytic. Catalysis depends on Glu-313, which acts as the Nucleophile. Asn-414 carries N-linked (GlcNAc...) asparagine glycosylation.

Belongs to the glycosyltransferase 15 family.

Its subcellular location is the golgi apparatus membrane. The protein operates within protein modification; protein glycosylation. Possible glycosyltransferase involved in N-linked glycosylation. Transfers an alpha-D-mannosyl residue from GDP-mannose into lipid-linked oligosaccharide, forming an alpha-(1-&gt;2)-D-mannosyl-D-mannose linkage. The sequence is that of Probable mannosyltransferase YUR1 (YUR1) from Saccharomyces cerevisiae (strain ATCC 204508 / S288c) (Baker's yeast).